The primary structure comprises 380 residues: Cytochrome b (380 aa).

The next 4 helical transmembrane spans lie at 33–53 (FGSL…FLAM), 77–98 (WLIR…YFHI), 113–133 (WNIG…GYVL), and 178–198 (FFAF…LHLL). Positions 83 and 97 each coordinate heme b. Heme b is bound by residues His-182 and His-196. Residue His-201 coordinates a ubiquinone. Helical transmembrane passes span 226-246 (YKDL…ALFS), 288-308 (LGGV…PFLH), 320-340 (VSQF…WIGG), and 347-367 (FIII…VFFP).

It belongs to the cytochrome b family. As to quaternary structure, the cytochrome bc1 complex contains 3 respiratory subunits (MT-CYB, CYC1 and UQCRFS1), 2 core proteins (UQCRC1 and UQCRC2) and probably 6 low-molecular weight proteins. The cofactor is heme b.

Its subcellular location is the mitochondrion inner membrane. Component of the ubiquinol-cytochrome c reductase complex (complex III or cytochrome b-c1 complex) that is part of the mitochondrial respiratory chain. The b-c1 complex mediates electron transfer from ubiquinol to cytochrome c. Contributes to the generation of a proton gradient across the mitochondrial membrane that is then used for ATP synthesis. This Sarda sarda (Atlantic bonito) protein is Cytochrome b (mt-cyb).